A 621-amino-acid chain; its full sequence is KIF-binding protein (621 aa).

Residues 51–75 (GPAPEDEDERPEAEDGPGAGDHALG) are disordered. Over residues 54–65 (PEDEDERPEAED) the composition is skewed to acidic residues. The residue at position 178 (Ser178) is a Phosphoserine.

This sequence belongs to the KIF-binding protein family. In terms of assembly, interacts with KIF1B; positively regulates KIF1B microtubule motor activity. Interacts with STMN2. As to expression, highly expressed in heart, brain, ovary, testis, spinal cord and all specific brain regions examined. Moderate expressed at intermediate level in all other adult tissues examined, as well as in fetal liver and brain. Not expressed in blood leukocytes.

Its subcellular location is the cytoplasm. It localises to the cytoskeleton. Its function is as follows. Activator of KIF1B plus-end-directed microtubule motor activity. Required for organization of axonal microtubules, and axonal outgrowth and maintenance during peripheral and central nervous system development. The chain is KIF-binding protein from Homo sapiens (Human).